A 222-amino-acid polypeptide reads, in one-letter code: Small ribosomal subunit protein uS3 (222 aa).

One can recognise a KH type-2 domain in the interval isoleucine 39 to lysine 108.

This sequence belongs to the universal ribosomal protein uS3 family. In terms of assembly, part of the 30S ribosomal subunit. Forms a tight complex with proteins S10 and S14.

Its function is as follows. Binds the lower part of the 30S subunit head. Binds mRNA in the 70S ribosome, positioning it for translation. The chain is Small ribosomal subunit protein uS3 from Clostridium acetobutylicum (strain ATCC 824 / DSM 792 / JCM 1419 / IAM 19013 / LMG 5710 / NBRC 13948 / NRRL B-527 / VKM B-1787 / 2291 / W).